The primary structure comprises 346 residues: Putative D-threonate 4-phosphate dehydrogenase (346 aa).

Substrate is bound by residues His-141 and Thr-142. Positions 171, 215, and 270 each coordinate a divalent metal cation. Residues Lys-278 and Arg-296 each contribute to the substrate site.

It belongs to the PdxA family. PdxA2 subfamily. In terms of assembly, homodimer. It depends on a divalent metal cation as a cofactor.

It carries out the reaction 4-O-phospho-D-threonate + NAD(+) = dihydroxyacetone phosphate + CO2 + NADH. Functionally, catalyzes the NAD-dependent oxidation and subsequent decarboxylation of D-threonate 4-phosphate to produce dihydroxyacetone phosphate (DHAP). This is Putative D-threonate 4-phosphate dehydrogenase from Cutibacterium acnes (strain DSM 16379 / KPA171202) (Propionibacterium acnes).